Reading from the N-terminus, the 272-residue chain is Large ribosomal subunit protein uL2 (272 aa).

Positions 222–272 are disordered; it reads GTAMNPVDHPHGGGEGRNFGKHPVSPWGKKTKGKKTRNNRLTDKFIVHRRS. Positions 250–259 are enriched in basic residues; the sequence is KKTKGKKTRN. The segment covering 261–272 has biased composition (basic and acidic residues); sequence RLTDKFIVHRRS.

It belongs to the universal ribosomal protein uL2 family. In terms of assembly, part of the 50S ribosomal subunit. Forms a bridge to the 30S subunit in the 70S ribosome.

In terms of biological role, one of the primary rRNA binding proteins. Required for association of the 30S and 50S subunits to form the 70S ribosome, for tRNA binding and peptide bond formation. It has been suggested to have peptidyltransferase activity; this is somewhat controversial. Makes several contacts with the 16S rRNA in the 70S ribosome. In Baumannia cicadellinicola subsp. Homalodisca coagulata, this protein is Large ribosomal subunit protein uL2.